A 372-amino-acid chain; its full sequence is sn-glycerol-3-phosphate import ATP-binding protein UgpC (372 aa).

The region spanning 2–233 (LDIQQLVKTY…PASTFVASFI (232 aa)) is the ABC transporter domain. 35 to 42 (GPSGCGKS) contacts ATP.

It belongs to the ABC transporter superfamily. sn-glycerol-3-phosphate importer (TC 3.A.1.1.3) family. In terms of assembly, the complex is composed of two ATP-binding proteins (UgpC), two transmembrane proteins (UgpA and UgpE) and a solute-binding protein (UgpB).

It localises to the cell inner membrane. The catalysed reaction is sn-glycerol 3-phosphate(out) + ATP + H2O = sn-glycerol 3-phosphate(in) + ADP + phosphate + H(+). Functionally, part of the ABC transporter complex UgpBAEC involved in sn-glycerol-3-phosphate (G3P) import. Responsible for energy coupling to the transport system. This chain is sn-glycerol-3-phosphate import ATP-binding protein UgpC, found in Vibrio vulnificus (strain YJ016).